The primary structure comprises 113 residues: MTMEAKAILRTARISPQKARLVADQVRGLPAERAVNLLKFSDKKAAHLIKKVVESAIANAENNQGADVDELKVQTIMVDEGPTLKRFMARAKGRGTRILKRTSHITVVVGAAK.

This sequence belongs to the universal ribosomal protein uL22 family. As to quaternary structure, part of the 50S ribosomal subunit.

This protein binds specifically to 23S rRNA; its binding is stimulated by other ribosomal proteins, e.g. L4, L17, and L20. It is important during the early stages of 50S assembly. It makes multiple contacts with different domains of the 23S rRNA in the assembled 50S subunit and ribosome. Functionally, the globular domain of the protein is located near the polypeptide exit tunnel on the outside of the subunit, while an extended beta-hairpin is found that lines the wall of the exit tunnel in the center of the 70S ribosome. This chain is Large ribosomal subunit protein uL22, found in Stenotrophomonas maltophilia (strain K279a).